The sequence spans 554 residues: DNA ligase B (554 aa).

Catalysis depends on K122, which acts as the N6-AMP-lysine intermediate.

The protein belongs to the NAD-dependent DNA ligase family. LigB subfamily.

The catalysed reaction is NAD(+) + (deoxyribonucleotide)n-3'-hydroxyl + 5'-phospho-(deoxyribonucleotide)m = (deoxyribonucleotide)n+m + AMP + beta-nicotinamide D-nucleotide.. Its function is as follows. Catalyzes the formation of phosphodiester linkages between 5'-phosphoryl and 3'-hydroxyl groups in double-stranded DNA using NAD as a coenzyme and as the energy source for the reaction. This Pseudomonas fluorescens (strain SBW25) protein is DNA ligase B.